The sequence spans 209 residues: Max dimerization protein 4 (209 aa).

The interval 6–23 (LLLLLEAAEYLERRDREA) is interaction with SIN3A and SIN3B. Residues 53–105 (NNRSSHNELEKHRRAKLRLYLEQLKQLGPLGPDSTRHTTLSLLKRAKMHIKKL) enclose the bHLH domain. The segment at 137–209 (SVERVRTDST…CRRPGCPGLS (73 aa)) is disordered. Residues 153 to 163 (DDSEQEVDIEG) are compositionally biased toward acidic residues. The segment covering 185–195 (SLQSSGCSDSS) has biased composition (polar residues).

Efficient DNA binding requires dimerization with another bHLH protein. Binds DNA as a heterodimer with MAX. Interacts with SIN3A AND SIN3B. Interacts with RNF17.

The protein resides in the nucleus. In terms of biological role, transcriptional repressor. Binds with MAX to form a sequence-specific DNA-binding protein complex which recognizes the core sequence 5'-CAC[GA]TG-3'. Antagonizes MYC transcriptional activity by competing for MAX and suppresses MYC dependent cell transformation. The chain is Max dimerization protein 4 (Mxd4) from Mus musculus (Mouse).